A 215-amino-acid chain; its full sequence is Probable transaldolase (215 aa).

Catalysis depends on Lys84, which acts as the Schiff-base intermediate with substrate.

Belongs to the transaldolase family. Type 3B subfamily.

It is found in the cytoplasm. The enzyme catalyses D-sedoheptulose 7-phosphate + D-glyceraldehyde 3-phosphate = D-erythrose 4-phosphate + beta-D-fructose 6-phosphate. The protein operates within carbohydrate degradation; pentose phosphate pathway; D-glyceraldehyde 3-phosphate and beta-D-fructose 6-phosphate from D-ribose 5-phosphate and D-xylulose 5-phosphate (non-oxidative stage): step 2/3. In terms of biological role, transaldolase is important for the balance of metabolites in the pentose-phosphate pathway. This is Probable transaldolase from Exiguobacterium sibiricum (strain DSM 17290 / CCUG 55495 / CIP 109462 / JCM 13490 / 255-15).